We begin with the raw amino-acid sequence, 84 residues long: Beta-cardiotoxin CTX21 (84 aa).

An N-terminal signal peptide occupies residues 1-21 (MKTLLLTLVVVTIVCLDLGYT). Intrachain disulfides connect Cys24–Cys43, Cys36–Cys61, Cys65–Cys76, and Cys77–Cys82.

This sequence belongs to the three-finger toxin family. Short-chain subfamily. Aminergic toxin sub-subfamily. In terms of tissue distribution, expressed by the venom gland.

The protein localises to the secreted. In terms of biological role, acts as a beta-blocker by binding to beta-1 and beta-2 adrenergic receptors (ADRB1 and ADRB2). It dose-dependently decreases the heart rate (bradycardia), whereas conventional cardiotoxins increases it. At 100 mg/kg, intraperitoneal injection into mice provokes labored breathing, impaired locomotion, lack of response to external stimuli, and death (after 30 minutes). This chain is Beta-cardiotoxin CTX21, found in Ophiophagus hannah (King cobra).